A 267-amino-acid chain; its full sequence is MATGELGDLGGYYFRFLPQKTFQSLSSKEITSRLRQWSMLGRIKAQAFGFDQTFQSYRKDDFVMAFFKDPNVIPNLKLLSDSSGQWIILGTEVKKIEAINVPCTQLSMSFFHRLYDEDIVRDSGHIVKCLDSFCDPFLISDELRRVLLVEDSEKYEIFSQPDREEFLFCLFKHLCLGGALCQYEDVISPYLETTKLIYKDLVSVRKNPQTKKIQITSSVFKVSAYDSAGMCYPSAKNHEQTFSYFIVDPIRRHLHVLYHCYGVGDMS.

Belongs to the CFAP300 family. As to quaternary structure, interacts with DNAAF2. Expressed in nasal epithelial cells.

Its subcellular location is the cytoplasm. It is found in the cytoskeleton. The protein localises to the cilium axoneme. In terms of biological role, cilium- and flagellum-specific protein that plays a role in axonemal structure organization and motility. May play a role in outer and inner dynein arm assembly. In Homo sapiens (Human), this protein is Cilia- and flagella-associated protein 300.